The sequence spans 1274 residues: MAVRQAATAGTPGPRREEEAALLFERAHYRHDPRWLLPVTPRLCLACALELLPDPGVSLVRKKHMLSCFQDALVRHTSLVTQLVSQDQRVCIHFISVLFGLLCSMEDGSVTDLCIEVLIQITTQLKLEQTIRCLLDECHKELCNMPSMRGSLATLTLLGKLVDAIPALADELVMEHGNLMEHLLRGLVYPSEGIQASVCYLYGKLYSSPVAAEMLSGHFREKLFPLFLSILDGAQTKELQINCLGLLRQLLKYDLFVSMIMNQDGLGESAKNIEGSSGNTSLPLVLKKLLLSRDETLQVASAHCITAVLVHSPAKHASAFIHADIPEFLFEHLSSSSEVLVWSSCNCLTLLVEEPLFFSKCHTVYGIEAVVRSLQGSLKMNNIELHKQGLLLFAEILTRQPEEIKLFTSSAMCRDAGRALQEAVSSPVLEVAAEALKATSAFLRKDHQSTPPVQYGELQALLEAMLNRCAEFSQTLLSRRPLGHASSRDSEKAILQRGKFLLSTLEGFRSACRLAIEFQSEPSAQENPFTAPSAKKEDTLEAFSEFLLSACDSLCIPMVMRHLEQTTHPALMEVFLSILHNLFVIVPHMKEKFSKKLASSSFIRLTLELKARFCSGLSHSALNQVCSNFLYYMCLNLLSAPEKTGPPSKEELSAVSELLQHGLPQISSRSPESLAFLSDRQYMEGAARQRQYCILLLFYLAYIHEDRFVSEAELFEAVQSFLLSLQDQGERPPLVVFKASIYLLAICQDKDNTLRETMVSAIRKFLEGIPDLQLVYTHHPLLLRFFLLYPELMSRYGHRVLELWFFWEESSYEELDDVTSAGQPALPASLVVLFQLLRSIPSILLILLDLIYSSPVDTAHKVLISLRTFLRRNEDIQVGGLIRGHFLLILQRLLVEHGASPSGASGNLPLLLSLLSLMQLRNVSEQELDSVAMKLLHQVSKLCGKCSPTDVDILQPSFNFLYWSLHQTTPSSQKRAAAVLLSSTGLMELLEKMLALTLAKADSPRTALLCSAWLLTASFSAQQHKGSLQVHQTLSVEMDQVLKALSFPKKKAALLSAAILCFLRTALRQSFSSALVALVPSGAQPLPATKDTVLAPLRMSQVRSLVIGLQNLLVQKDPLLSQACVGCLEALLDYLDARSPDIALHVASQPWNRFLLFTLLDAGENSFLRPEILRLMTLFMRYRSSSVLSHEEVGDVLQGVALADLSTLSNTTLQALHGFFQQLQSMGHLADHSMAQTLQASLEGLPPSTSSGQPPLQDMLCLGGVAVSLSHIRN.

As to expression, expressed predominantly in testis. Weakly expressed in spleen and thymus. Expressed in the ovaries, Fallopian tubes and uterus.

Functionally, required for normal meiotic chromosome synapsis. May be involved in the formation of meiotic double-strand breaks (DSBs) in spermatocytes. The sequence is that of Meiosis inhibitor protein 1 from Homo sapiens (Human).